We begin with the raw amino-acid sequence, 507 residues long: MEELQRHFEIDGSRQQRFIYPFLFQEYIYALAHYYALNGSIFYETVENLGYDKKSSSLIVKRLITRMHRQNRLIISINDSNQNRFIGHNKNLYTQTVSEGFAVIMEIPFSLRLVFSLEEKEISKSHNLRSIHSLFPFFEDKLSHLNHVSHILIPHPAHLEILVQILHCWIQDAPSLHLLRFFLHDYHNSKSINAQKKSIFVCSKENRRFFSFIYNFHVYESELMFVFLRKQSSHLRSTSFGTVLERTHFYGKIEHLVVVLRNDFQKTLWLFKDPFMHYVRYQGKSILASKGTHLRMKKWKSYLVLFWQSHFYLWSQPERIRINQLYNHSFYFLGYLSGVRRNPSVVRSQMLENSFLIETSIKKFETLVPITPLIGSLAKAKFCNVSGHPISKPSWADLSDSDIINRFGRIYRNFSHYHSGSSKKQTLYQIKYILRLSCARTLARKHKSTVRAFLKRLGSKFLEEFLTEEEQVLSLIFPRTPSPSYRSHRERIWYLDIIYINILTNHV.

This sequence belongs to the intron maturase 2 family. MatK subfamily.

It localises to the plastid. The protein resides in the chloroplast. Functionally, usually encoded in the trnK tRNA gene intron. Probably assists in splicing its own and other chloroplast group II introns. The polypeptide is Maturase K (Cananga odorata (Ylang-ylang tree)).